The following is a 903-amino-acid chain: Protein translocase subunit SecA (903 aa).

Residues glutamine 87, 105–109 (GEGKT), and aspartate 507 contribute to the ATP site. Positions 854-893 (STMADSSGDVKSSTAESKAPYVRDGRKVGRNEPCPCGSGK) are disordered. The segment covering 856 to 869 (MADSSGDVKSSTAE) has biased composition (polar residues). The span at 874–883 (YVRDGRKVGR) shows a compositional bias: basic and acidic residues. Cysteine 887, cysteine 889, cysteine 898, and histidine 899 together coordinate Zn(2+).

It belongs to the SecA family. Monomer and homodimer. Part of the essential Sec protein translocation apparatus which comprises SecA, SecYEG and auxiliary proteins SecDF-YajC and YidC. The cofactor is Zn(2+).

The protein localises to the cell inner membrane. It localises to the cytoplasm. The catalysed reaction is ATP + H2O + cellular proteinSide 1 = ADP + phosphate + cellular proteinSide 2.. Its function is as follows. Part of the Sec protein translocase complex. Interacts with the SecYEG preprotein conducting channel. Has a central role in coupling the hydrolysis of ATP to the transfer of proteins into and across the cell membrane, serving both as a receptor for the preprotein-SecB complex and as an ATP-driven molecular motor driving the stepwise translocation of polypeptide chains across the membrane. The polypeptide is Protein translocase subunit SecA (Nitrosococcus oceani (strain ATCC 19707 / BCRC 17464 / JCM 30415 / NCIMB 11848 / C-107)).